Consider the following 449-residue polypeptide: Hyaluronidase-3 (449 aa).

Residues methionine 1 to valine 23 form the signal peptide. Cystine bridges form between cysteine 47–cysteine 340 and cysteine 211–cysteine 227. N-linked (GlcNAc...) asparagine glycosylation is found at asparagine 67, asparagine 103, and asparagine 111. The active-site Proton donor is glutamate 135. N-linked (GlcNAc...) asparagine glycosylation is present at asparagine 153. Asparagine 357 carries N-linked (GlcNAc...) asparagine glycosylation. Intrachain disulfides connect cysteine 365–cysteine 376, cysteine 370–cysteine 427, and cysteine 429–cysteine 438. Asparagine 401 carries an N-linked (GlcNAc...) asparagine glycan. An EGF-like domain is found at cysteine 427 to cysteine 438.

This sequence belongs to the glycosyl hydrolase 56 family. In terms of assembly, monomer. As to expression, expressed by the venom gland.

The protein resides in the secreted. It carries out the reaction Random hydrolysis of (1-&gt;4)-linkages between N-acetyl-beta-D-glucosamine and D-glucuronate residues in hyaluronate.. Snake venom endo-hyaluronidase that degrades hyaluronan to smaller oligosaccharide fragments. In venom, it is not toxic by itself, but increases the diffusion of other venom proteins by degrading the extracellular matrix. In addition, it displays antiedematogenic activity. This Cerastes cerastes (Horned desert viper) protein is Hyaluronidase-3.